The following is a 202-amino-acid chain: 3-isopropylmalate dehydratase small subunit (202 aa).

This sequence belongs to the LeuD family. LeuD type 1 subfamily. As to quaternary structure, heterodimer of LeuC and LeuD.

The enzyme catalyses (2R,3S)-3-isopropylmalate = (2S)-2-isopropylmalate. Its pathway is amino-acid biosynthesis; L-leucine biosynthesis; L-leucine from 3-methyl-2-oxobutanoate: step 2/4. Catalyzes the isomerization between 2-isopropylmalate and 3-isopropylmalate, via the formation of 2-isopropylmaleate. In Nocardia farcinica (strain IFM 10152), this protein is 3-isopropylmalate dehydratase small subunit.